Reading from the N-terminus, the 874-residue chain is DNA mismatch repair protein MutS (874 aa).

630–637 serves as a coordination point for ATP; it reads GPNMAGKS.

Belongs to the DNA mismatch repair MutS family.

Its function is as follows. This protein is involved in the repair of mismatches in DNA. It is possible that it carries out the mismatch recognition step. This protein has a weak ATPase activity. This chain is DNA mismatch repair protein MutS, found in Chlorobium phaeovibrioides (strain DSM 265 / 1930) (Prosthecochloris vibrioformis (strain DSM 265)).